Here is a 187-residue protein sequence, read N- to C-terminus: Coiled-coil domain-containing protein 201 (187 aa).

Disordered regions lie at residues 1–79 and 92–159; these read MEPG…PPAT and KESS…RAAA. A coiled-coil region spans residues 111–131; that stretch reads LTQRQRQRQQQQQQQESLRAK. Residues 147-157 are compositionally biased toward basic residues; sequence GRKRRDPKKRA.

This is Coiled-coil domain-containing protein 201 from Homo sapiens (Human).